We begin with the raw amino-acid sequence, 235 residues long: MTDETSGPAEPVTDAPGDAESPAQPKRRLRLLLTVAAVVLFLDVVTKVLAVRLLTPGQPVSIIGDTVTWTLVRNSGAAFSMATGYTWVLTLVATGVVIGIIWMGRRLVSPWWALGLGLILGGATGNLVDRFFRSPGPLRGHVVDFFSVGWWPVFNVADPSVVGGAILLVALSLFGFDFDTVGRRRPGEDAEPSAGASDSTPEAPAADGPDKPAGPVGPEDAAEESKTVGHQAEPS.

Positions 1 to 23 (MTDETSGPAEPVTDAPGDAESPA) are disordered. A run of 3 helical transmembrane segments spans residues 31-51 (LLLT…VLAV), 84-104 (GYTW…IWMG), and 108-128 (VSPW…GNLV). Catalysis depends on residues Asp144 and Asp158. The helical transmembrane segment at 156-176 (VADPSVVGGAILLVALSLFGF) threads the bilayer. Residues 185 to 235 (RPGEDAEPSAGASDSTPEAPAADGPDKPAGPVGPEDAAEESKTVGHQAEPS) are disordered. The segment covering 201 to 218 (PEAPAADGPDKPAGPVGP) has biased composition (low complexity).

This sequence belongs to the peptidase A8 family.

It localises to the cell membrane. The enzyme catalyses Release of signal peptides from bacterial membrane prolipoproteins. Hydrolyzes -Xaa-Yaa-Zaa-|-(S,diacylglyceryl)Cys-, in which Xaa is hydrophobic (preferably Leu), and Yaa (Ala or Ser) and Zaa (Gly or Ala) have small, neutral side chains.. Its pathway is protein modification; lipoprotein biosynthesis (signal peptide cleavage). In terms of biological role, this protein specifically catalyzes the removal of signal peptides from prolipoproteins. This Mycolicibacterium smegmatis (strain ATCC 700084 / mc(2)155) (Mycobacterium smegmatis) protein is Lipoprotein signal peptidase.